We begin with the raw amino-acid sequence, 1179 residues long: DNA-directed RNA polymerase subunit beta' (1179 aa).

Residues Cys-60, Cys-62, Cys-75, and Cys-78 each contribute to the Zn(2+) site. Positions 450, 452, and 454 each coordinate Mg(2+). Zn(2+) contacts are provided by Cys-791, Cys-865, Cys-872, and Cys-875.

It belongs to the RNA polymerase beta' chain family. The RNAP catalytic core consists of 2 alpha, 1 beta, 1 beta' and 1 omega subunit. When a sigma factor is associated with the core the holoenzyme is formed, which can initiate transcription. Mg(2+) is required as a cofactor. Requires Zn(2+) as cofactor.

It catalyses the reaction RNA(n) + a ribonucleoside 5'-triphosphate = RNA(n+1) + diphosphate. DNA-dependent RNA polymerase catalyzes the transcription of DNA into RNA using the four ribonucleoside triphosphates as substrates. The polypeptide is DNA-directed RNA polymerase subunit beta' (Alkaliphilus oremlandii (strain OhILAs) (Clostridium oremlandii (strain OhILAs))).